Here is a 238-residue protein sequence, read N- to C-terminus: CD209 antigen-like protein A (238 aa).

The Cytoplasmic portion of the chain corresponds to 1–51 (MSDSKEMGKRQLRPLDEELLTSSHTRHSIKGFGFQTNSGFSSFTGCLVHSQ). A helical; Signal-anchor for type II membrane protein membrane pass occupies residues 52 to 72 (VPLALQVLFLAVCSVLLVVIL). Residues 73-238 (VKVYKIPSSQ…KKLSTSCPSK (166 aa)) lie on the Extracellular side of the membrane. An intrachain disulfide couples Cys-108 to Cys-119. Positions 115–229 (FQGSCYFFSV…CTNKKFWICK (115 aa)) constitute a C-type lectin domain. Residue Asn-130 is glycosylated (N-linked (GlcNAc...) asparagine). Cystine bridges form between Cys-136/Cys-228 and Cys-207/Cys-220. The Ca(2+) site is built by Glu-198, Asn-200, Leu-202, Glu-205, Asn-216, and Asp-217. N-linked (GlcNAc...) asparagine glycosylation occurs at Asn-216.

As to expression, predominantly expressed in dendritic cells. Detected at very low levels in lung, spleen, lymph nodes and bone marrow.

The protein localises to the membrane. Probable pathogen-recognition receptor. May mediate the endocytosis of pathogens which are subsequently degraded in lysosomal compartments. May recognize in a calcium-dependent manner high mannose N-linked oligosaccharides in a variety of pathogen antigens. In Mus musculus (Mouse), this protein is CD209 antigen-like protein A (Cd209a).